Reading from the N-terminus, the 92-residue chain is MSRSTKKAPFVHEGLLKKIEEMNASGDKKVVKTWSRSSTIYPQMIGHTIAVHDGRKHVPVYLSEDMVGHKLGEFVLTRTYRGHVADKTSKRK.

This sequence belongs to the universal ribosomal protein uS19 family.

Functionally, protein S19 forms a complex with S13 that binds strongly to the 16S ribosomal RNA. This is Small ribosomal subunit protein uS19 from Clostridium botulinum (strain Eklund 17B / Type B).